A 346-amino-acid chain; its full sequence is 4-hydroxy-3-methylbut-2-enyl diphosphate reductase (346 aa).

Position 19 (cysteine 19) interacts with [4Fe-4S] cluster. Histidine 48 and histidine 84 together coordinate (2E)-4-hydroxy-3-methylbut-2-enyl diphosphate. Histidine 48 and histidine 84 together coordinate dimethylallyl diphosphate. Histidine 48 and histidine 84 together coordinate isopentenyl diphosphate. Cysteine 106 is a binding site for [4Fe-4S] cluster. Histidine 134 serves as a coordination point for (2E)-4-hydroxy-3-methylbut-2-enyl diphosphate. Histidine 134 contributes to the dimethylallyl diphosphate binding site. Histidine 134 contributes to the isopentenyl diphosphate binding site. Glutamate 136 functions as the Proton donor in the catalytic mechanism. A (2E)-4-hydroxy-3-methylbut-2-enyl diphosphate-binding site is contributed by threonine 175. Residue cysteine 205 coordinates [4Fe-4S] cluster. The (2E)-4-hydroxy-3-methylbut-2-enyl diphosphate site is built by serine 233, serine 234, asparagine 235, and serine 278. Residues serine 233, serine 234, asparagine 235, and serine 278 each coordinate dimethylallyl diphosphate. Residues serine 233, serine 234, asparagine 235, and serine 278 each contribute to the isopentenyl diphosphate site.

Belongs to the IspH family. It depends on [4Fe-4S] cluster as a cofactor.

It catalyses the reaction isopentenyl diphosphate + 2 oxidized [2Fe-2S]-[ferredoxin] + H2O = (2E)-4-hydroxy-3-methylbut-2-enyl diphosphate + 2 reduced [2Fe-2S]-[ferredoxin] + 2 H(+). It carries out the reaction dimethylallyl diphosphate + 2 oxidized [2Fe-2S]-[ferredoxin] + H2O = (2E)-4-hydroxy-3-methylbut-2-enyl diphosphate + 2 reduced [2Fe-2S]-[ferredoxin] + 2 H(+). It participates in isoprenoid biosynthesis; dimethylallyl diphosphate biosynthesis; dimethylallyl diphosphate from (2E)-4-hydroxy-3-methylbutenyl diphosphate: step 1/1. The protein operates within isoprenoid biosynthesis; isopentenyl diphosphate biosynthesis via DXP pathway; isopentenyl diphosphate from 1-deoxy-D-xylulose 5-phosphate: step 6/6. In terms of biological role, catalyzes the conversion of 1-hydroxy-2-methyl-2-(E)-butenyl 4-diphosphate (HMBPP) into a mixture of isopentenyl diphosphate (IPP) and dimethylallyl diphosphate (DMAPP). Acts in the terminal step of the DOXP/MEP pathway for isoprenoid precursor biosynthesis. The sequence is that of 4-hydroxy-3-methylbut-2-enyl diphosphate reductase from Brucella abortus (strain S19).